Reading from the N-terminus, the 329-residue chain is MENLEALTEEAIELVNCANDLAALDTVRVNYLGKKGPLTALRKTLGKLSAEERPVVGAKINEAVARVQEQLNQKKAALELAAINTKLASETIDVTLEGRRNEVGGLHPVTRTLDRIERIFSNVGYKVEQGPEIEDNYHNFDALNIPAHHPARAMHDTFYVDEDRVLRTHTSPVQVRTMENQQPPIYIICPGRVYRCDSDQTHTPMFHQVEGLVVDKNVSFADLKGTIVDFLRVFFEKDDLEVRFRPSFFPFTEPSAEFDIQWASSKTGWLEVGGCGMVHPNVLRASGVDPEVYTGFAFGLGVERLAMLRYGVNDLRLFFENDLDFLKQF.

E253 is a binding site for Mg(2+).

The protein belongs to the class-II aminoacyl-tRNA synthetase family. Phe-tRNA synthetase alpha subunit type 1 subfamily. As to quaternary structure, tetramer of two alpha and two beta subunits. Mg(2+) is required as a cofactor.

It localises to the cytoplasm. It catalyses the reaction tRNA(Phe) + L-phenylalanine + ATP = L-phenylalanyl-tRNA(Phe) + AMP + diphosphate + H(+). The chain is Phenylalanine--tRNA ligase alpha subunit from Teredinibacter turnerae (strain ATCC 39867 / T7901).